A 972-amino-acid polypeptide reads, in one-letter code: Optomotor-blind protein (972 aa).

6 disordered regions span residues 44–248, 263–286, 508–563, 645–676, 805–889, and 918–972; these read SLLT…YFPA, PGLY…HAHH, AKGF…HPHA, ADVE…TGSP, AVTP…PSEL, and EEAA…GTDQ. Composition is skewed to low complexity over residues 49-80 and 97-142; these read GSNN…NTNN and SNHS…NNTS. Pro residues predominate over residues 155 to 176; that stretch reads PPSPAGTPPPTIVGLPPIPPPN. 2 stretches are compositionally biased toward low complexity: residues 177-193 and 201-212; these read NNSS…AAAH and AHHSPSTGAAAP. Over residues 213–225 the composition is skewed to pro residues; the sequence is PAGPTGLPPPTPP. Residues 226-237 are compositionally biased toward low complexity; it reads HHLQQQQQQQQH. Basic residues predominate over residues 274-286; sequence PPHHPGAHPHAHH. The segment at residues 332–513 is a DNA-binding region (T-box); sequence LEGKDLWEKF…NNPFAKGFRD (182 aa). Gly residues predominate over residues 818–831; that stretch reads PPGGGGGGLGGGVV. Over residues 835–851 the composition is skewed to low complexity; it reads PRSLSSSPRPRPASHSP. Residue Ser-887 is modified to Phosphoserine. The segment covering 952–963 has biased composition (basic residues); that stretch reads HPHHQTHLHSHH.

In terms of tissue distribution, in third-instar larvae, expressed in the brain region that will develop into optic lobes and more weakly in the thoracic part of the ventral ganglion.

The protein resides in the nucleus. In terms of biological role, essential protein that may function as a transcription regulator. Vital for pupal development. Required for proper development of the optic lobes and wings, and abdominal pigmentation. In Drosophila melanogaster (Fruit fly), this protein is Optomotor-blind protein (bi).